A 667-amino-acid chain; its full sequence is DNA ligase (667 aa).

NAD(+)-binding positions include 34-38, 83-84, and Glu113; these read DAEYD and SL. The N6-AMP-lysine intermediate role is filled by Lys115. NAD(+)-binding residues include Arg136, Glu170, Lys286, and Lys310. The Zn(2+) site is built by Cys404, Cys407, Cys422, and Cys427. A BRCT domain is found at 589–667; the sequence is ATDSVLSGKT…EQQLEDVVGK (79 aa).

Belongs to the NAD-dependent DNA ligase family. LigA subfamily. The cofactor is Mg(2+). Mn(2+) is required as a cofactor.

It carries out the reaction NAD(+) + (deoxyribonucleotide)n-3'-hydroxyl + 5'-phospho-(deoxyribonucleotide)m = (deoxyribonucleotide)n+m + AMP + beta-nicotinamide D-nucleotide.. Its function is as follows. DNA ligase that catalyzes the formation of phosphodiester linkages between 5'-phosphoryl and 3'-hydroxyl groups in double-stranded DNA using NAD as a coenzyme and as the energy source for the reaction. It is essential for DNA replication and repair of damaged DNA. The protein is DNA ligase of Oceanobacillus iheyensis (strain DSM 14371 / CIP 107618 / JCM 11309 / KCTC 3954 / HTE831).